A 461-amino-acid polypeptide reads, in one-letter code: Argininosuccinate lyase (461 aa).

This sequence belongs to the lyase 1 family. Argininosuccinate lyase subfamily.

The protein resides in the cytoplasm. The catalysed reaction is 2-(N(omega)-L-arginino)succinate = fumarate + L-arginine. The protein operates within amino-acid biosynthesis; L-arginine biosynthesis; L-arginine from L-ornithine and carbamoyl phosphate: step 3/3. The sequence is that of Argininosuccinate lyase from Nitrosomonas eutropha (strain DSM 101675 / C91 / Nm57).